The primary structure comprises 157 residues: Rieske domain-containing protein (157 aa).

Met1 bears the N-acetylmethionine mark. Ser6 carries the phosphoserine modification. 2 Rieske domains span residues 16-127 (TSVC…VDNG) and 17-131 (SVCV…NIYV). [2Fe-2S] cluster is bound by residues Cys57, His59, Cys80, and His83.

It depends on [2Fe-2S] cluster as a cofactor.

The polypeptide is Rieske domain-containing protein (Rfesd) (Mus musculus (Mouse)).